The chain runs to 541 residues: Cytochrome P450 monooxygenase claW (541 aa).

The chain crosses the membrane as a helical span at residues 12-32 (VINALVILFSFWAFLSLIRVI). A heme-binding site is contributed by Cys480.

It belongs to the cytochrome P450 family. Heme serves as cofactor.

The protein resides in the membrane. The protein operates within secondary metabolite biosynthesis; terpenoid biosynthesis. Functionally, cytochrome P450 monooxygenase; part of the gene cluster that mediates the biosynthesis of clavilactone A, a meroterpenoid that features a unique benzo-fused ten-membered carbocyclic ring unit with an alpha,beta-epoxy-gamma-lactone moiety, forming an intriguing 10/5/3 tricyclic nested skeleton. Cytochrome P450 monooxygenases claO, claP, claQ, claU, and claW are close orthologs, suggesting that a redundant function or pseudogenes are present in the cla cluster. These monoxygenases are not involved in clavilactone A biosynthesis nor its modification. ClaR, ClaS and ClaT are sufficient to produce clavilactone A. The biosynthesis begins with the prenyltransferase claS that transfers geranyl pyrophosphate (GPP) to hydroquinone to produces geranylhydroquinone. The cytochrome P450 monooxygenase claR then catalyzes the diradical coupling reaction between the intramolecular hydroquinone and allyl moieties to form the benzo-fused ten-membered carbocyclic ring unit of wigantol. Finally the cytochrome P450 monooxygenase claT exquisitely and stereoselectively assembles the alpha,beta-epoxy-gamma-lactone moiety, producing clavilactone A via arnebinol A. The sequence is that of Cytochrome P450 monooxygenase claW from Ampulloclitocybe clavipes (Club foot).